The following is a 540-amino-acid chain: Probable protein kinase UbiB (540 aa).

The helical transmembrane segment at 24–44 threads the bilayer; that stretch reads LLFDQPLLPWWLASLRLLMPW. The region spanning 126 to 494 is the Protein kinase domain; that stretch reads RFDVEPLASA…RRRQGDRWAL (369 aa). ATP-binding positions include 132–140 and K154; that span reads LASASVAQV. The Proton acceptor role is filled by D289. 2 helical membrane-spanning segments follow: residues 496–516 and 518–538; these read LLGA…AETA and LAAP…YLIV.

It belongs to the ABC1 family. UbiB subfamily.

Its subcellular location is the cell inner membrane. It participates in cofactor biosynthesis; ubiquinone biosynthesis [regulation]. Its function is as follows. Is probably a protein kinase regulator of UbiI activity which is involved in aerobic coenzyme Q (ubiquinone) biosynthesis. The chain is Probable protein kinase UbiB from Pseudomonas putida (strain ATCC 700007 / DSM 6899 / JCM 31910 / BCRC 17059 / LMG 24140 / F1).